The following is a 120-amino-acid chain: Glycine cleavage system H protein (120 aa).

In terms of domain architecture, Lipoyl-binding spans Val17 to Lys99. Lys58 is modified (N6-lipoyllysine).

This sequence belongs to the GcvH family. The glycine cleavage system is composed of four proteins: P, T, L and H. It depends on (R)-lipoate as a cofactor.

The glycine cleavage system catalyzes the degradation of glycine. The H protein shuttles the methylamine group of glycine from the P protein to the T protein. In Rhizobium rhizogenes (strain K84 / ATCC BAA-868) (Agrobacterium radiobacter), this protein is Glycine cleavage system H protein.